Consider the following 368-residue polypeptide: MARTITFDIPSQYKLVDLIGEGAYGTVCSAIHKPSGIKVAIKKIQPFSKKLFVTRTIREIKLLRYFHEHENIISILDKVRPVSIDKLNAVYLVEELMETDLQKVINNQNSGFSTLSDDHVQYFTYQILRALKSIHSAQVIHRDIKPSNLLLNSNCDLKVCDFGLARCLASSSDSRETLVGFMTEYVATRWYRAPEIMLTFQEYTTAMDIWSCGCILAEMVSGKPLFPGRDYHHQLWLILEVLGTPSFEDFNQIKSKRAKEYIANLPMRPPLPWETVWSKTDLNPDMIDLLDKMLQFNPDKRISAAEALRHPYLAMYHDPSDEPEYPPLNLDDEFWKLDNKIMRPEEEEEVPIEMLKDMLYDELMKTME.

A Protein kinase domain is found at 13 to 313 (YKLVDLIGEG…AAEALRHPYL (301 aa)). ATP is bound by residues 19–27 (IGEGAYGTV) and lysine 42. Residue aspartate 143 is the Proton acceptor of the active site. A Phosphothreonine modification is found at threonine 183. Residues 183–185 (TEY) carry the TXY motif. Tyrosine 185 carries the phosphotyrosine modification.

The protein belongs to the protein kinase superfamily. Ser/Thr protein kinase family. MAP kinase subfamily. HOG1 sub-subfamily. In the nucleus, KSS1 forms a complex with DIG1, DIG2 and STE12; in contrast to FUS3 the interaction of KSS1 with STE12 does not depend on DIG1 and DIG2. Phosphorylated KSS1 shows reduced interaction with STE12. During pheromone activation and phosphorylation, KSS1 forms a membrane-associated complex with the scaffold protein STE5, the MAPKK STE7, the MAPKKK STE11, and the G-protein beta subunit GBB/STE4; interacting directly with POF1, STE7 and STE5 proteins. It depends on Mg(2+) as a cofactor. Post-translationally, dually phosphorylated on Thr-183 and Tyr-185 by STE7 in response to pheromone or carbon/nitrogen limitation, which activates the enzyme. Activated FUS3 down-regulates KSS1 phosphorylation.

It is found in the nucleus. The protein localises to the cytoplasm. It localises to the periplasm. It catalyses the reaction L-seryl-[protein] + ATP = O-phospho-L-seryl-[protein] + ADP + H(+). The catalysed reaction is L-threonyl-[protein] + ATP = O-phospho-L-threonyl-[protein] + ADP + H(+). Its activity is regulated as follows. Activated by tyrosine and threonine phosphorylation after pheromone treatment or carbon/nitrogen limitation. In terms of biological role, together with closely related FUS3, KSS1 is the final kinase in the signal transduction cascade regulating activation/repression of the mating and filamentation pathways, induced by pheromone and nitrogen/carbon limitation, respectively. Phosphorylated KSS1 activates both pathways, whereas activated FUS3 activates the mating but suppresses the filamentation pathway. KSS1 activity is down-regulated by FUS3 during pheromone induction to prevent inappropriate activation of the filamentation pathway. During induction of filamentation, KSS1 activates the transcription factor STE12 resulting in its binding to and activation of filamentation specific genes. Non-activated KSS1 has a kinase-independent repressive effect on STE12 transcriptional activity, that is mediated by direct binding to STE12 and depends on the presence of DIG1 and DIG2, and that is required for the suppression of filamentation under normal growth conditions. SSN3/SRB10 contributes further to the suppression of filamentation under these conditions by reducing STE12 stability independent of KSS1. FUS3 can partially compensate for the lack of KSS1 but filamentation becomes constitutively induced at a low level in the absence of any signal. KSS1 phosphorylates STE7, STE5, FAR1, DIG1, DIG2, STE12, and SST2. This Saccharomyces cerevisiae (strain ATCC 204508 / S288c) (Baker's yeast) protein is Mitogen-activated protein kinase KSS1 (KSS1).